Reading from the N-terminus, the 292-residue chain is Aquaporin-3 (292 aa).

Residues 1–24 (MGRQKELMNRCGEMLHIRYRLLRQ) lie on the Cytoplasmic side of the membrane. A helical transmembrane segment spans residues 25–42 (ALAECLGTLILVMFGCGS). Over 43–56 (VAQVVLSRGTHGGF) the chain is Extracellular. Residues 57-74 (LTINLAFGFAVTLGILVA) traverse the membrane as a helical segment. The Cytoplasmic portion of the chain corresponds to 75–78 (GQVS). The discontinuously helical intramembrane region spans 79 to 92 (GAHLNPAVTFAMCF). The NPA 1 motif lies at 83-85 (NPA). At 93–100 (LAREPWIK) the chain is on the cytoplasmic side. A helical membrane pass occupies residues 101 to 121 (LPIYALAQTLGAFLGAGIVFG). The Extracellular segment spans residues 122–159 (LYYDAIWAFANNELFVSGPNGTAGIFATYPSGHLDMVN). Asn141 carries an N-linked (GlcNAc...) asparagine glycan. A helical transmembrane segment spans residues 160-177 (GFFDQFIGTAALIVCVLA). Residues 178-189 (IVDPYNNPVPRG) are Cytoplasmic-facing. The helical transmembrane segment at 190-206 (LEAFTVGLVVLVIGTSM) threads the bilayer. Residues 207–210 (GFNS) are Extracellular-facing. Positions 211 to 224 (GYAVNPARDFGPRL) form an intramembrane region, discontinuously helical. The NPA 2 signature appears at 215-217 (NPA). At 225–242 (FTALAGWGSEVFTTGRHW) the chain is on the extracellular side. A helical transmembrane segment spans residues 243-264 (WWVPIVSPLLGSIAGVFVYQLM). The Cytoplasmic portion of the chain corresponds to 265 to 292 (IGCHLEQPPPSTEEENVKLAHMKHKEQI).

It belongs to the MIP/aquaporin (TC 1.A.8) family. As to quaternary structure, homotetramer; each monomer provides an independent glycerol/water pore. Could also exist in other oligomeric states. In terms of tissue distribution, detected in principal cells in collecting ducts in kidney medulla (at protein level). Renal medulla and colon. Predominantly in the inner medulla. Expressed in basal layer of epidermal keratinocytes.

The protein resides in the cell membrane. It is found in the basolateral cell membrane. It catalyses the reaction glycerol(in) = glycerol(out). It carries out the reaction H2O(in) = H2O(out). The catalysed reaction is urea(in) = urea(out). The enzyme catalyses H2O2(out) = H2O2(in). Functionally, aquaglyceroporins form homotetrameric transmembrane channels, with each monomer independently mediating glycerol and water transport across the plasma membrane along their osmotic gradient. Could also be permeable to urea. Also participates in cell permeability to H2O2 and H2O2-mediated signaling. In skin, transports glycerol to the epidermis and stratum corneum, where it maintains hydration, elasticity, and supports lipid biosynthesis for barrier repair. In kidney, contributes to the reabsorption of water, helping the body maintain proper fluid balance. This is Aquaporin-3 from Mus musculus (Mouse).